The chain runs to 463 residues: A-type ATP synthase subunit B (463 aa).

It belongs to the ATPase alpha/beta chains family. As to quaternary structure, has multiple subunits with at least A(3), B(3), C, D, E, F, H, I and proteolipid K(x).

It is found in the cell membrane. In terms of biological role, component of the A-type ATP synthase that produces ATP from ADP in the presence of a proton gradient across the membrane. The B chain is a regulatory subunit. In Methanothrix thermoacetophila (strain DSM 6194 / JCM 14653 / NBRC 101360 / PT) (Methanosaeta thermophila), this protein is A-type ATP synthase subunit B.